We begin with the raw amino-acid sequence, 90 residues long: MAANNQGEIRYLTPLSVDTKKKKYCRFKKSGIRYIDYKDPEFLKKFLNEQGKILPRRITGTSLKFQRRVAQAVKRARHLALLPYVTDMMK.

It belongs to the bacterial ribosomal protein bS18 family. As to quaternary structure, part of the 30S ribosomal subunit. Forms a tight heterodimer with protein bS6.

Functionally, binds as a heterodimer with protein bS6 to the central domain of the 16S rRNA, where it helps stabilize the platform of the 30S subunit. This chain is Small ribosomal subunit protein bS18, found in Porphyromonas gingivalis (strain ATCC 33277 / DSM 20709 / CIP 103683 / JCM 12257 / NCTC 11834 / 2561).